The following is a 951-amino-acid chain: Autophagy-related protein 9 (951 aa).

A disordered region spans residues 1–165 (MMTSNILSRF…APGPSSRADR (165 aa)). Residues 1-239 (MMTSNILSRF…NGIWSILLNR (239 aa)) lie on the Cytoplasmic side of the membrane. Residues 16–33 (SPSVYETLRQQDAESNPS) show a composition bias toward polar residues. Residues 35–54 (VEERAGLEFEDDRRTQFSDR) show a composition bias toward basic and acidic residues. A compositionally biased stretch (polar residues) spans 79–94 (FLTQRSPQRTSGTATA). Positions 97–108 (GGRRRKHSRPRW) are enriched in basic residues. The chain crosses the membrane as a helical span at residues 240–260 (GLSLLTFAFVVGFSTFLTNCI). Residues 261 to 288 (DYRNFRGSRKMDDILIQQCTKKMSMSST) are Lumenal-facing. Residues 289 to 309 (FLLWLLTVFWIGKAFQYLMDI) traverse the membrane as a helical segment. Residues 310–455 (RRLKHMHDFY…KALSEGLRRR (146 aa)) are Cytoplasmic-facing. The stretch at 456–476 (FIFAGIMNIFVAPFIVVYFLM) is an intramembrane region. Residues 477–542 (HYFFRYFNEY…QFPKDKTVQV (66 aa)) are Cytoplasmic-facing. A helical transmembrane segment spans residues 543 to 563 (AGFVAFVSGALASVLALVSII). Topologically, residues 564 to 577 (DPELFLGFEITHDR) are lumenal. Residues 578–598 (TVLFYLGVFGSVWAFARGLVP) form a helical membrane-spanning segment. The Cytoplasmic segment spans residues 599 to 644 (EETNVFDPEFALLEVIDFTHYFPNHWKGRLHSDEVRKEFAVLYQMK). An intramembrane segment occupies 645-665 (IVIFLEEILSMIFTPFILWFS). At 666–951 (LPKCSDRLID…DNRGRTTVGI (286 aa)) the chain is on the cytoplasmic side. A disordered region spans residues 848–897 (SRPVRPITDPIEDDNESPSAEIRRGAVKKSPHTTTGSSGGAIGTSDSNLG).

It belongs to the ATG9 family. Homotrimer; forms a homotrimer with a central pore that forms a path between the two membrane leaflets. Post-translationally, phosphorylated by atg1. Atg1 phosphorylation is required for preautophagosome elongation.

The protein resides in the preautophagosomal structure membrane. It localises to the cytoplasmic vesicle membrane. It is found in the golgi apparatus membrane. The protein localises to the endoplasmic reticulum membrane. It catalyses the reaction a 1,2-diacyl-sn-glycero-3-phosphocholine(in) = a 1,2-diacyl-sn-glycero-3-phosphocholine(out). The enzyme catalyses a 1,2-diacyl-sn-glycero-3-phospho-L-serine(in) = a 1,2-diacyl-sn-glycero-3-phospho-L-serine(out). The catalysed reaction is a 1,2-diacyl-sn-glycero-3-phosphoethanolamine(in) = a 1,2-diacyl-sn-glycero-3-phosphoethanolamine(out). It carries out the reaction a 1,2-diacyl-sn-glycero-3-phospho-(1D-myo-inositol-3-phosphate)(in) = a 1,2-diacyl-sn-glycero-3-phospho-(1D-myo-inositol-3-phosphate)(out). Its function is as follows. Phospholipid scramblase involved in autophagy and cytoplasm to vacuole transport (Cvt) vesicle formation. Cycles between the preautophagosomal structure/phagophore assembly site (PAS) and the cytoplasmic vesicle pool and supplies membrane for the growing autophagosome. Lipid scramblase activity plays a key role in preautophagosomal structure/phagophore assembly by distributing the phospholipids that arrive through atg2 from the cytoplasmic to the luminal leaflet of the bilayer, thereby driving autophagosomal membrane expansion. Required for mitophagy. Also involved in endoplasmic reticulum-specific autophagic process and is essential for the survival of cells subjected to severe ER stress. Different machineries are required for anterograde trafficking to the PAS during either the Cvt pathway or bulk autophagy and for retrograde trafficking. This is Autophagy-related protein 9 (atg9) from Aspergillus oryzae (strain ATCC 42149 / RIB 40) (Yellow koji mold).